The chain runs to 76 residues: UPF0235 protein MMAR_2910 (76 aa).

It belongs to the UPF0235 family.

This Mycobacterium marinum (strain ATCC BAA-535 / M) protein is UPF0235 protein MMAR_2910.